The sequence spans 322 residues: DNA repair and recombination protein RadA (322 aa).

105-112 (GMYGSGKT) is a binding site for ATP.

This sequence belongs to the eukaryotic RecA-like protein family.

Its function is as follows. Involved in DNA repair and in homologous recombination. Binds and assemble on single-stranded DNA to form a nucleoprotein filament. Hydrolyzes ATP in a ssDNA-dependent manner and promotes DNA strand exchange between homologous DNA molecules. The polypeptide is DNA repair and recombination protein RadA (Methanococcus maripaludis (strain C5 / ATCC BAA-1333)).